Here is a 138-residue protein sequence, read N- to C-terminus: Acidic phospholipase A2 1 (138 aa).

The signal sequence occupies residues 1–16 (MRTLWIMAVLLVGVDG). 7 disulfides stabilise this stretch: Cys-42-Cys-131, Cys-44-Cys-60, Cys-59-Cys-110, Cys-65-Cys-138, Cys-66-Cys-103, Cys-73-Cys-97, and Cys-91-Cys-101. Ca(2+) contacts are provided by Tyr-43, Gly-45, and Gly-47. Residue His-63 is part of the active site. Asp-64 is a binding site for Ca(2+). The active site involves Asp-104.

This sequence belongs to the phospholipase A2 family. Group II subfamily. D49 sub-subfamily. In terms of assembly, homodimer. Ca(2+) serves as cofactor. In terms of tissue distribution, expressed by the venom gland.

It localises to the secreted. It carries out the reaction a 1,2-diacyl-sn-glycero-3-phosphocholine + H2O = a 1-acyl-sn-glycero-3-phosphocholine + a fatty acid + H(+). Snake venom phospholipase A2 (PLA2) that is highly lipolytic and myolytic. PLA2 catalyzes the calcium-dependent hydrolysis of the 2-acyl groups in 3-sn-phosphoglycerides. This chain is Acidic phospholipase A2 1, found in Protobothrops flavoviridis (Habu).